Here is a 238-residue protein sequence, read N- to C-terminus: Large ribosomal subunit protein uL2 (238 aa).

2 disordered regions span residues 1 to 34 (MGKR…PPLS) and 197 to 238 (VDHP…RRKR). Residues 224–238 (KVGHIAARRTGRRKR) show a composition bias toward basic residues.

This sequence belongs to the universal ribosomal protein uL2 family. Part of the 50S ribosomal subunit. Forms a bridge to the 30S subunit in the 70S ribosome.

One of the primary rRNA binding proteins. Required for association of the 30S and 50S subunits to form the 70S ribosome, for tRNA binding and peptide bond formation. It has been suggested to have peptidyltransferase activity; this is somewhat controversial. Makes several contacts with the 16S rRNA in the 70S ribosome. This chain is Large ribosomal subunit protein uL2, found in Aeropyrum pernix (strain ATCC 700893 / DSM 11879 / JCM 9820 / NBRC 100138 / K1).